We begin with the raw amino-acid sequence, 797 residues long: MASCRAWNLRVLVAVVCGLLTGIILGLGIWRIVIRIQRGKSTSSSSTPTEFCRNGGTWENGRCICTEEWKGLRCTIANFCENSTYMGFTFARIPVGRYGPSLQTCGKDTPNAGNPMAVRLCSLSLYGEIELQKVTIGNCNENLETLEKQVKDVTAPLNNISSEVQILTSDANKLTAENITSATRVVGQIFNTSRNASPEAKKVAIVTVSQLLDASEDAFQRVAATANDDALTTLIEQMETYSLSLGNQSVVEPNIAIQSANFSSENAVGPSNVRFSVQKGASSSLVSSSTFIHTNVDGLNPDAQTELQVLLNMTKNYTKTCGFVVYQNDKLFQSKTFTAKSDFSQKIISSKTDENEQDQSASVDMVFSPKYNQKEFQLYSYACVYWNLSAKDWDTYGCQKDKGTDGFLRCRCNHTTNFAVLMTFKKDYQYPKSLDILSNVGCALSVTGLALTVIFQIVTRKVRKTSVTWVLVNLCISMLIFNLLFVFGIENSNKNLQTSDGDINNIDFDNNDIPRTDTINIPNPMCTAIAALLHYFLLVTFTWNALSAAQLYYLLIRTMKPLPRHFILFISLIGWGVPAIVVAITVGVIYSQNGNNPQWELDYRQEKICWLAIPEPNGVIKSPLLWSFIVPVTIILISNVVMFITISIKVLWKNNQNLTSTKKVSSMKKIVSTLSVAVVFGITWILAYLMLVNDDSIRIVFSYIFCLFNTTQGLQIFILYTVRTKVFQSEASKVLMLLSSIGRRKSLPSVTRPRLRVKMYNFLRSLPTLHERFRLLETSPSTEEITLSESDNAKESI.

Residues 1–26 form the signal peptide; that stretch reads MASCRAWNLRVLVAVVCGLLTGIILG. The Extracellular portion of the chain corresponds to 27–438; that stretch reads LGIWRIVIRI…QYPKSLDILS (412 aa). 9 N-linked (GlcNAc...) asparagine glycosylation sites follow: asparagine 82, asparagine 159, asparagine 178, asparagine 191, asparagine 247, asparagine 261, asparagine 312, asparagine 316, and asparagine 387. A GAIN-B domain is found at 275–428; sequence FSVQKGASSS…AVLMTFKKDY (154 aa). 2 cysteine pairs are disulfide-bonded: cysteine 383–cysteine 410 and cysteine 398–cysteine 412. The segment at 383 to 428 is GPS; sequence CVYWNLSAKDWDTYGCQKDKGTDGFLRCRCNHTTNFAVLMTFKKDY. Asparagine 413 carries an N-linked (GlcNAc...) asparagine glycan. The helical transmembrane segment at 439-459 threads the bilayer; that stretch reads NVGCALSVTGLALTVIFQIVT. The Cytoplasmic segment spans residues 460–468; sequence RKVRKTSVT. The chain crosses the membrane as a helical span at residues 469 to 489; that stretch reads WVLVNLCISMLIFNLLFVFGI. Residues 490–528 lie on the Extracellular side of the membrane; that stretch reads ENSNKNLQTSDGDINNIDFDNNDIPRTDTINIPNPMCTA. The helical transmembrane segment at 529-549 threads the bilayer; that stretch reads IAALLHYFLLVTFTWNALSAA. Residues 550 to 565 lie on the Cytoplasmic side of the membrane; sequence QLYYLLIRTMKPLPRH. The helical transmembrane segment at 566–586 threads the bilayer; sequence FILFISLIGWGVPAIVVAITV. Residues 587–623 lie on the Extracellular side of the membrane; sequence GVIYSQNGNNPQWELDYRQEKICWLAIPEPNGVIKSP. A helical membrane pass occupies residues 624–644; that stretch reads LLWSFIVPVTIILISNVVMFI. The Cytoplasmic portion of the chain corresponds to 645 to 669; that stretch reads TISIKVLWKNNQNLTSTKKVSSMKK. A helical membrane pass occupies residues 670 to 690; that stretch reads IVSTLSVAVVFGITWILAYLM. Topologically, residues 691–698 are extracellular; sequence LVNDDSIR. The chain crosses the membrane as a helical span at residues 699-719; it reads IVFSYIFCLFNTTQGLQIFIL. Over 720–797 the chain is Cytoplasmic; it reads YTVRTKVFQS…SESDNAKESI (78 aa).

The protein belongs to the G-protein coupled receptor 2 family. Adhesion G-protein coupled receptor (ADGR) subfamily.

It is found in the membrane. Functionally, orphan receptor. The chain is Adhesion G-protein coupled receptor G7 (ADGRG7) from Homo sapiens (Human).